A 24-amino-acid chain; its full sequence is Osteocalcin (24 aa).

Residues 1-24 enclose the Gla domain; the sequence is REVCELNPDCDELADHIGFQEAYR. 3 residues coordinate Ca(2+): glutamate 2, glutamate 5, and aspartate 11. 4-carboxyglutamate is present on residues glutamate 2 and glutamate 5. Cysteine 4 and cysteine 10 are disulfide-bonded.

The protein belongs to the osteocalcin/matrix Gla protein family. In terms of processing, gamma-carboxyglutamate residues are formed by vitamin K dependent carboxylation by GGCX. These residues are essential for the binding of calcium. Decarboxylation promotes the hormone activity.

It localises to the secreted. Functionally, the carboxylated form is one of the main organic components of the bone matrix, which constitutes 1-2% of the total bone protein: it acts as a negative regulator of bone formation and is required to limit bone formation without impairing bone resorption or mineralization. The carboxylated form binds strongly to apatite and calcium. Its function is as follows. The uncarboxylated form acts as a hormone secreted by osteoblasts, which regulates different cellular processes, such as energy metabolism, male fertility and brain development. Regulates of energy metabolism by acting as a hormone favoring pancreatic beta-cell proliferation, insulin secretion and sensitivity and energy expenditure. Uncarboxylated osteocalcin hormone also promotes testosterone production in the testes: acts as a ligand for G protein-coupled receptor GPRC6A at the surface of Leydig cells, initiating a signaling response that promotes the expression of enzymes required for testosterone synthesis in a CREB-dependent manner. Also acts as a regulator of brain development: osteocalcin hormone crosses the blood-brain barrier and acts as a ligand for GPR158 on neurons, initiating a signaling response that prevents neuronal apoptosis in the hippocampus, favors the synthesis of all monoamine neurotransmitters and inhibits that of gamma-aminobutyric acid (GABA). Osteocalcin also crosses the placenta during pregnancy and maternal osteocalcin is required for fetal brain development. The polypeptide is Osteocalcin (Homo sapiens neanderthalensis (Neanderthal)).